The primary structure comprises 796 residues: Probable phosphoketolase 2 (796 aa).

The protein belongs to the XFP family. The cofactor is thiamine diphosphate.

In Lactiplantibacillus plantarum (strain ATCC BAA-793 / NCIMB 8826 / WCFS1) (Lactobacillus plantarum), this protein is Probable phosphoketolase 2.